The primary structure comprises 428 residues: Light-independent protochlorophyllide reductase subunit N (428 aa).

[4Fe-4S] cluster-binding residues include C31, C56, and C117.

Belongs to the BchN/ChlN family. As to quaternary structure, protochlorophyllide reductase is composed of three subunits; BchL, BchN and BchB. Forms a heterotetramer of two BchB and two BchN subunits. Requires [4Fe-4S] cluster as cofactor.

The catalysed reaction is chlorophyllide a + oxidized 2[4Fe-4S]-[ferredoxin] + 2 ADP + 2 phosphate = protochlorophyllide a + reduced 2[4Fe-4S]-[ferredoxin] + 2 ATP + 2 H2O. It functions in the pathway porphyrin-containing compound metabolism; bacteriochlorophyll biosynthesis (light-independent). In terms of biological role, component of the dark-operative protochlorophyllide reductase (DPOR) that uses Mg-ATP and reduced ferredoxin to reduce ring D of protochlorophyllide (Pchlide) to form chlorophyllide a (Chlide). This reaction is light-independent. The NB-protein (BchN-BchB) is the catalytic component of the complex. The polypeptide is Light-independent protochlorophyllide reductase subunit N (Rhodopseudomonas palustris (strain BisB18)).